Consider the following 511-residue polypeptide: Maturase K (511 aa).

Belongs to the intron maturase 2 family. MatK subfamily.

The protein resides in the plastid. The protein localises to the chloroplast. Its function is as follows. Usually encoded in the trnK tRNA gene intron. Probably assists in splicing its own and other chloroplast group II introns. The protein is Maturase K of Triticum aestivum (Wheat).